The chain runs to 435 residues: Probable exopolygalacturonase B (435 aa).

Positions 1–15 are cleaved as a signal peptide; the sequence is MKFFTAALFASAVSA. N-linked (GlcNAc...) asparagine glycosylation is found at Asn-59, Asn-184, and Asn-224. The active-site Proton donor is the Asp-254. Cys-256 and Cys-273 are disulfide-bonded. Residues Asn-262 and Asn-274 are each glycosylated (N-linked (GlcNAc...) asparagine). His-277 is a catalytic residue. 4 N-linked (GlcNAc...) asparagine glycosylation sites follow: Asn-301, Asn-328, Asn-365, and Asn-368. Residues Cys-391 and Cys-397 are joined by a disulfide bond.

Belongs to the glycosyl hydrolase 28 family.

It localises to the secreted. The catalysed reaction is [(1-&gt;4)-alpha-D-galacturonosyl](n) + H2O = alpha-D-galacturonate + [(1-&gt;4)-alpha-D-galacturonosyl](n-1). Its function is as follows. Specific in hydrolyzing the terminal glycosidic bond of polygalacturonic acid and oligogalacturonates. The protein is Probable exopolygalacturonase B (pgxB) of Aspergillus terreus (strain NIH 2624 / FGSC A1156).